We begin with the raw amino-acid sequence, 118 residues long: T cell receptor gamma variable 8 (118 aa).

Positions 1 to 17 are cleaved as a signal peptide; it reads MLLALALLLAFLPPASQ. One can recognise an Ig-like domain in the interval 18-118; the sequence is KSSNLEGRTK…GVYYCATWDR (101 aa). Cys-41 and Cys-113 form a disulfide bridge.

As to quaternary structure, gamma-delta TR is a heterodimer composed of a gamma and delta chain; disulfide-linked. The gamma-delta TR is associated with the transmembrane signaling CD3 coreceptor proteins following the stoichiometry: a single gamma-delta TR heterodimer associates with one CD3D-CD3E heterodimer, one CD3G-CD3E heterodimer and one CD247 homodimer forming a stable octameric structure. Upon activation, gamma-delta TR complex associates with FCER1G to initiate intracellular signaling.

It localises to the cell membrane. Functionally, v region of the variable domain of T cell receptor (TR) gamma chain that participates in the antigen recognition. Gamma-delta TRs recognize a variety of self and foreign non-peptide antigens frequently expressed at the epithelial boundaries between the host and external environment, including endogenous lipids presented by MH-like protein CD1D and phosphoantigens presented by butyrophilin-like molecule BTN3A1. Upon antigen recognition induces rapid, innate-like immune responses involved in pathogen clearance and tissue repair. Binding of gamma-delta TR complex to antigen triggers phosphorylation of immunoreceptor tyrosine-based activation motifs (ITAMs) in the CD3 chains by the LCK and FYN kinases, allowing the recruitment, phosphorylation, and activation of ZAP70 that facilitates phosphorylation of the scaffolding proteins LCP2 and LAT. This lead to the formation of a supramolecular signalosome that recruits the phospholipase PLCG1, resulting in calcium mobilization and ERK activation, ultimately leading to T cell expansion and differentiation into effector cells. Gamma-delta TRs are produced through somatic rearrangement of a limited repertoire of variable (V), diversity (D), and joining (J) genes. The potential diversity of gamma-delta TRs is conferred by the unique ability to rearrange (D) genes in tandem and to utilize all three reading frames. The combinatorial diversity is considerably increased by the sequence exonuclease trimming and random nucleotide (N) region additions which occur during the V-(D)-J rearrangements. This chain is T cell receptor gamma variable 8, found in Homo sapiens (Human).